Here is a 234-residue protein sequence, read N- to C-terminus: Transcription factor ILR3 (234 aa).

The tract at residues 34–85 (QPIGVSSNSSAGVDGSAGNSEASKEPGSKKRGRCESSSATSSKACREKQRRD) is disordered. The span at 36 to 54 (IGVSSNSSAGVDGSAGNSE) shows a compositional bias: polar residues. Residues 71-122 (SATSSKACREKQRRDRLNDKFMELGAILEPGNPPKTDKAAILVDAVRMVTQL) form the bHLH domain.

As to quaternary structure, homodimer. Interacts with BTS and BHLH47/PYE. Widely expressed throughout development, mostly in vasculatures.

It localises to the nucleus. Functionally, transcription factor. Plays a role in resistance to amide-linked indole-3-acetic acid (IAA) conjugates such as IAA-Leu and IAA-Phe. May regulate gene expression in response to metal homeostasis changes. The sequence is that of Transcription factor ILR3 (ILR3) from Arabidopsis thaliana (Mouse-ear cress).